The sequence spans 152 residues: Large ribosomal subunit protein uL13 (152 aa).

The protein belongs to the universal ribosomal protein uL13 family. In terms of assembly, part of the 50S ribosomal subunit.

This protein is one of the early assembly proteins of the 50S ribosomal subunit, although it is not seen to bind rRNA by itself. It is important during the early stages of 50S assembly. This is Large ribosomal subunit protein uL13 from Borreliella afzelii (strain PKo) (Borrelia afzelii).